The chain runs to 334 residues: Ketol-acid reductoisomerase (NADP(+)) (334 aa).

Positions Met1–Thr181 constitute a KARI N-terminal Rossmann domain. NADP(+) contacts are provided by residues Tyr25–Gln28, Arg48, Ser52, and Asp82–Gln85. Residue His107 is part of the active site. Residue Gly133 participates in NADP(+) binding. The KARI C-terminal knotted domain maps to Thr182–Ile327. The Mg(2+) site is built by Asp190, Glu194, Glu226, and Glu230. Substrate is bound at residue Ser251.

This sequence belongs to the ketol-acid reductoisomerase family. Mg(2+) serves as cofactor.

It catalyses the reaction (2R)-2,3-dihydroxy-3-methylbutanoate + NADP(+) = (2S)-2-acetolactate + NADPH + H(+). The catalysed reaction is (2R,3R)-2,3-dihydroxy-3-methylpentanoate + NADP(+) = (S)-2-ethyl-2-hydroxy-3-oxobutanoate + NADPH + H(+). It participates in amino-acid biosynthesis; L-isoleucine biosynthesis; L-isoleucine from 2-oxobutanoate: step 2/4. The protein operates within amino-acid biosynthesis; L-valine biosynthesis; L-valine from pyruvate: step 2/4. Involved in the biosynthesis of branched-chain amino acids (BCAA). Catalyzes an alkyl-migration followed by a ketol-acid reduction of (S)-2-acetolactate (S2AL) to yield (R)-2,3-dihydroxy-isovalerate. In the isomerase reaction, S2AL is rearranged via a Mg-dependent methyl migration to produce 3-hydroxy-3-methyl-2-ketobutyrate (HMKB). In the reductase reaction, this 2-ketoacid undergoes a metal-dependent reduction by NADPH to yield (R)-2,3-dihydroxy-isovalerate. The polypeptide is Ketol-acid reductoisomerase (NADP(+)) (Staphylococcus aureus (strain USA300)).